The sequence spans 223 residues: MTIANLIDHTALKPHTQKSEIKKLIEEAKAYQFASVCVNPTWVEFAAEELKGTEIDVCTVIGFPLGANTTETKAFETKDAIAKGATEVDMVINIAALKDGNDDFVEADIRAVVEAAKGKALVKVIIETCLLTDEEKERACRLAVAAGADFVKTSTGFSTGGATAEDIALMRKTVGPDIGVKASGGIRTKEDVETMISNGATRIGASAGVSIVSGAEGKNEDNY.

Residue Asp89 is the Proton donor/acceptor of the active site. The active-site Schiff-base intermediate with acetaldehyde is Lys152. Catalysis depends on Lys181, which acts as the Proton donor/acceptor.

The protein belongs to the DeoC/FbaB aldolase family. DeoC type 1 subfamily.

Its subcellular location is the cytoplasm. The enzyme catalyses 2-deoxy-D-ribose 5-phosphate = D-glyceraldehyde 3-phosphate + acetaldehyde. It functions in the pathway carbohydrate degradation; 2-deoxy-D-ribose 1-phosphate degradation; D-glyceraldehyde 3-phosphate and acetaldehyde from 2-deoxy-alpha-D-ribose 1-phosphate: step 2/2. In terms of biological role, catalyzes a reversible aldol reaction between acetaldehyde and D-glyceraldehyde 3-phosphate to generate 2-deoxy-D-ribose 5-phosphate. The sequence is that of Deoxyribose-phosphate aldolase 2 from Bacillus licheniformis (strain ATCC 14580 / DSM 13 / JCM 2505 / CCUG 7422 / NBRC 12200 / NCIMB 9375 / NCTC 10341 / NRRL NRS-1264 / Gibson 46).